The following is a 465-amino-acid chain: Amino-acid carrier protein AlsT (465 aa).

10 consecutive transmembrane segments (helical) span residues 20 to 40 (LFYILIGLGLFFTIRFGFIQF), 82 to 102 (VALAIATGGPGAVFWMWVVAA), 142 to 162 (WLGIVFAILITVSFGLIFNAV), 177 to 197 (VNKIVVAIVLAVLTAFIIFGG), 208 to 228 (IVPVMAGIYILIALFVVITNI), 241 to 261 (NALGFEQVVGGGIGGIIVIGA), 296 to 316 (LGVFFDTFIICTSTAFIILLY), 336 to 356 (IGGWAPTFIAVAMFLFAFSSV), 382 to 402 (IAVIAMVVYGSLSGFQIVWDM), and 405 to 425 (LFMGIMALINLIVIALLSNVA).

The protein belongs to the alanine or glycine:cation symporter (AGCS) (TC 2.A.25) family.

The protein resides in the cell membrane. This Bacillus subtilis (strain 168) protein is Amino-acid carrier protein AlsT (alsT).